The chain runs to 888 residues: Mitogen-activated protein kinase kinase kinase 12 (888 aa).

The segment covering 26 to 42 has biased composition (basic and acidic residues); that stretch reads MRKLDPDTSDCTPEKDL. The interval 26 to 104 is disordered; sequence MRKLDPDTSD…TGSPESRASR (79 aa). A phosphothreonine mark is found at Thr37 and Thr43. The segment covering 64-75 has biased composition (pro residues); it reads SPSPGGEPPPEP. In terms of domain architecture, Protein kinase spans 158–399; sequence ILDLQWVGSG…FRQILLHLDI (242 aa). ATP contacts are provided by residues 164–172 and Lys185; that span reads VGSGAQGAV. The Proton acceptor role is filled by Asp269. 2 leucine-zipper regions span residues 423–444 and 476–497; these read VKLH…EEEL and LNAL…EQAL. The tract at residues 557-620 is disordered; the sequence is GVGLPGCPKA…GGLGVGPTAW (64 aa). The span at 572-584 shows a compositional bias: basic residues; it reads RSRRGKTRHRKAS. Positions 605 to 615 are enriched in gly residues; the sequence is GGLGSPGGLGV. Position 640 is a phosphoserine (Ser640). Disordered regions lie at residues 654–731 and 743–888; these read RGRG…YQHL and TRSQ…SLPP. A compositionally biased stretch (gly residues) spans 704–725; the sequence is PGEGVGLLGTGREGTTGRGGSR. A compositionally biased stretch (acidic residues) spans 752–763; that stretch reads SEEEEGEVDSEV. 2 stretches are compositionally biased toward polar residues: residues 776 to 789 and 798 to 812; these read NMRQ…SENP and SEPS…GSTN. Residues 813–823 are compositionally biased toward basic and acidic residues; the sequence is TDERPDERSDD.

This sequence belongs to the protein kinase superfamily. STE Ser/Thr protein kinase family. MAP kinase kinase kinase subfamily. In terms of assembly, homodimer. Interacts with MBIP. Requires Mg(2+) as cofactor. In terms of processing, autophosphorylated on Ser/Thr. Phosphorylated in cytosol under basal conditions and dephosphorylated when membrane-associated. Post-translationally, the activity of MAP3K12 can be regulated through its proteasomal degradation. APOE, through a receptor-mediated mechanism, activates MAP3K12 by preventing its proteasomal degradation.

The protein localises to the cytoplasm. It localises to the cell membrane. The catalysed reaction is L-seryl-[protein] + ATP = O-phospho-L-seryl-[protein] + ADP + H(+). It carries out the reaction L-threonyl-[protein] + ATP = O-phospho-L-threonyl-[protein] + ADP + H(+). Part of a non-canonical MAPK signaling pathway. Activated by APOE, enhances the AP-1-mediated transcription of APP, via a MAP kinase signal transduction pathway composed of MAP2K7 and MAPK1/ERK2 and MAPK3/ERK1. May be an activator of the JNK/SAPK pathway. The polypeptide is Mitogen-activated protein kinase kinase kinase 12 (Map3k12) (Rattus norvegicus (Rat)).